The primary structure comprises 152 residues: MANLATLDHPYLPQSASLLFDAKAKANLTFEDIARHIGRNEVATAAIFYGQAKASKEDVVKLAELLRLPAQALEMQMGGFPDRGRSVDMPPREPLIYRLYEIVQNYGYAYKAVLNEKFGDGIMSAISFSTNVEKETDDDGNNWAVITLRGKW.

Catalysis depends on residues Arg98, Glu101, and Ser124.

Belongs to the cyanase family.

It catalyses the reaction cyanate + hydrogencarbonate + 3 H(+) = NH4(+) + 2 CO2. Functionally, catalyzes the reaction of cyanate with bicarbonate to produce ammonia and carbon dioxide. The sequence is that of Cyanate hydratase from Uncinocarpus reesii (strain UAMH 1704).